A 338-amino-acid polypeptide reads, in one-letter code: Inositol 2-dehydrogenase (338 aa).

The protein belongs to the Gfo/Idh/MocA family. As to quaternary structure, homotetramer.

It catalyses the reaction myo-inositol + NAD(+) = scyllo-inosose + NADH + H(+). Involved in the oxidation of myo-inositol (MI) to 2-keto-myo-inositol (2KMI or 2-inosose). This is Inositol 2-dehydrogenase from Azotobacter vinelandii (strain DJ / ATCC BAA-1303).